The primary structure comprises 248 residues: FCS-Like Zinc finger 14 (248 aa).

Positions 85 to 94 (VCRSEPNQPG) are enriched in polar residues. A disordered region spans residues 85–108 (VCRSEPNQPGRSDPVQFMSHGGST). An FLZ-type zinc finger spans residues 181-224 (GFLNSCYLCRKKLHGQDIFIYRGEKAFCSTECRSSHIANDERKE).

Belongs to the FLZ family. Interacts with KIN10 and KIN11 via its FLZ-type zinc finger domain. Interacts with KINB1, KINB2 and KINB3 via its N-terminal part.

It is found in the cytoplasm. The protein resides in the nucleus. Functionally, may act as an adapter to facilitate the interaction of SnRK1 complex with effector proteins, conferring tissue- and stimulus-type specific differences in the SnRK1 regulation pathway. This chain is FCS-Like Zinc finger 14, found in Arabidopsis thaliana (Mouse-ear cress).